The chain runs to 234 residues: Carboxy-S-adenosyl-L-methionine synthase (234 aa).

Residues tyrosine 35, 60–62 (GCS), 83–84 (DN), 109–110 (DI), asparagine 124, and arginine 191 contribute to the S-adenosyl-L-methionine site.

The protein belongs to the class I-like SAM-binding methyltransferase superfamily. Cx-SAM synthase family. As to quaternary structure, homodimer.

The enzyme catalyses prephenate + S-adenosyl-L-methionine = carboxy-S-adenosyl-L-methionine + 3-phenylpyruvate + H2O. In terms of biological role, catalyzes the conversion of S-adenosyl-L-methionine (SAM) to carboxy-S-adenosyl-L-methionine (Cx-SAM). In Campylobacter concisus (strain 13826), this protein is Carboxy-S-adenosyl-L-methionine synthase.